A 582-amino-acid chain; its full sequence is Choline kinase (582 aa).

Residues Met1–Ser36 are disordered. Phosphoserine; by PKA is present on Ser30. Phosphoserine is present on residues Ser48 and Ser51. Thr54 carries the post-translational modification Phosphothreonine. Ser85 carries the phosphoserine; by PKA modification.

This sequence belongs to the choline/ethanolamine kinase family. As to quaternary structure, monomer. Interacts with NAP1. Mg(2+) serves as cofactor.

The protein resides in the cytoplasm. It carries out the reaction choline + ATP = phosphocholine + ADP + H(+). The enzyme catalyses ethanolamine + ATP = phosphoethanolamine + ADP + H(+). Its pathway is phospholipid metabolism; phosphatidylcholine biosynthesis; phosphocholine from choline: step 1/1. Functionally, catalyzes the committed step in the synthesis of phosphatidylcholine by the CDP-choline pathway. Also exhibits ethanolamine kinase activity but it is a poor substrate at 14% efficiency compared with choline. This Saccharomyces cerevisiae (strain ATCC 204508 / S288c) (Baker's yeast) protein is Choline kinase.